The following is a 280-amino-acid chain: MSEKFDCHYCRDPLQGKKYVQKDGRHCCLKCFDKFCANTCVDCRKPISADAKEVHYKNRYWHDNCFRCAKCLHPLASETFVSKDGKILCNKCATREDSPRCKGCFKAIVAGDQNVEYKGTVWHKDCFTCSNCKQVIGTGSFFPKGEDFYCVTCHETKFAKHCVKCNKAITSGGITYQDQPWHAECFVCVTCSKKLAGQRFTAVEDQYYCVDCYKNFVAKKCAGCKNPITGFGKGSSVVAYEGQSWHDYCFHCKKCSVNLANKRFVFHNEQVYCPDCAKKL.

Serine 2 is subject to N-acetylserine. Residue lysine 4 is modified to N6-acetyllysine. A C4-type zinc finger spans residues 7–31; sequence CHYCRDPLQGKKYVQKDGRHCCLKC. 4 LIM zinc-binding domains span residues 40–92, 101–153, 162–212, and 221–276; these read CVDC…CNKC, CKGC…CVTC, CVKC…CVDC, and CAGC…CPDC. Lysine 86 is covalently cross-linked (Glycyl lysine isopeptide (Lys-Gly) (interchain with G-Cter in SUMO2)).

In terms of tissue distribution, isoform 1 seems to be most abundant in each tissue and isoform 2 much less abundant. Isoform 1 is highly expressed in skeletal muscle and lung, and to a lesser extent in heart, brain and kidney. Isoform 2 was found in brain, lung kidney and genital organs.

It is found in the cytoplasm. Its subcellular location is the nucleus. Its function is as follows. May have an involvement in muscle development or hypertrophy. Isoform 2 binds to RBP-J and plays a negative regulatory role in the RBP-J-mediated transcription in mammalian systems. This is Four and a half LIM domains protein 1 (Fhl1) from Mus musculus (Mouse).